The primary structure comprises 161 residues: Methylated-DNA--protein-cysteine methyltransferase (161 aa).

The Nucleophile; methyl group acceptor role is filled by Cys-128.

This sequence belongs to the MGMT family.

It is found in the cytoplasm. The catalysed reaction is a 6-O-methyl-2'-deoxyguanosine in DNA + L-cysteinyl-[protein] = S-methyl-L-cysteinyl-[protein] + a 2'-deoxyguanosine in DNA. It catalyses the reaction a 4-O-methyl-thymidine in DNA + L-cysteinyl-[protein] = a thymidine in DNA + S-methyl-L-cysteinyl-[protein]. Its function is as follows. Involved in the cellular defense against the biological effects of O6-methylguanine (O6-MeG) and O4-methylthymine (O4-MeT) in DNA. Repairs the methylated nucleobase in DNA by stoichiometrically transferring the methyl group to a cysteine residue in the enzyme. This is a suicide reaction: the enzyme is irreversibly inactivated. This Methanocaldococcus vulcanius (strain ATCC 700851 / DSM 12094 / M7) (Methanococcus vulcanius) protein is Methylated-DNA--protein-cysteine methyltransferase.